The primary structure comprises 248 residues: Probable transcriptional regulatory protein Oter_1471 (248 aa).

This sequence belongs to the TACO1 family.

Its subcellular location is the cytoplasm. In Opitutus terrae (strain DSM 11246 / JCM 15787 / PB90-1), this protein is Probable transcriptional regulatory protein Oter_1471.